The following is a 60-amino-acid chain: MAVQQVKKSRSKRDMRRSHDSLTNPTLSTDKSTGELHLRHHVSPNGFYKGRKVVDTKSED.

The segment at 1-60 (MAVQQVKKSRSKRDMRRSHDSLTNPTLSTDKSTGELHLRHHVSPNGFYKGRKVVDTKSED) is disordered. Residues 7-16 (KKSRSKRDMR) show a composition bias toward basic residues. Polar residues predominate over residues 22–31 (LTNPTLSTDK).

The protein belongs to the bacterial ribosomal protein bL32 family.

This is Large ribosomal subunit protein bL32 from Francisella tularensis subsp. holarctica (strain LVS).